The sequence spans 494 residues: MFLAKSIVCLALLAVANAQFDTNYASGRSGMVHLFEWKWDDIAAECENFLGPNGFAGVQVSPVNENAVKDSRPWWERYQPISYKLETRSGNEQQFASMVKRCNAVGVRTYVDVVFNHMAADGGTYGTGGSTASPSTKSFPGVPYSSLDFNPTCSINNYNDANQVRNCELVGLRDLNQGNSYVQDKVVEFLDHLIDLGVAGFRVDAAKHMWPADLAVIYGRLKTLNTDHGFNSGSKAYIVQEVIDMGGEAISKSEYTGLGAVTEFRHSDSIGKVFRGKDQLQYLTNWGTAWGFAASDRSLVFVDNHDNQRGHGAGGADVLTYKVPKQYKMASAFMLAHPFGTPRVMSSFSFSDTDQGPPTTDGHNIASPVFNSDNSCSGGWVCEHRWRQIYNMVAFRNAVGSDAIQNWWDNGSNQIAFSRGSRGFVAFNNDNYDLNSSLQTGLPAGTYCDVISGSKSGSSCTGKTVSVGSDGRASIYLGSSEDDGVLAIHVNAKL.

The N-terminal stretch at 1–18 is a signal peptide; it reads MFLAKSIVCLALLAVANA. Gln19 is modified (pyrrolidone carboxylic acid). A disulfide bond links Cys46 and Cys102. Ca(2+) contacts are provided by Asn116, Arg165, and Asp174. Cys153 and Cys167 are disulfide-bonded. Residue Arg202 participates in chloride binding. Asp204 acts as the Nucleophile in catalysis. His208 is a binding site for Ca(2+). Glu241 serves as the catalytic Proton donor. The chloride site is built by Asn304 and Arg343. 2 disulfide bridges follow: Cys376/Cys382 and Cys448/Cys460.

The protein belongs to the glycosyl hydrolase 13 family. In terms of assembly, monomer. It depends on Ca(2+) as a cofactor. Chloride serves as cofactor.

It catalyses the reaction Endohydrolysis of (1-&gt;4)-alpha-D-glucosidic linkages in polysaccharides containing three or more (1-&gt;4)-alpha-linked D-glucose units.. This Drosophila yakuba (Fruit fly) protein is Alpha-amylase B (Amy-d).